Reading from the N-terminus, the 601-residue chain is Secretogranin-2 (601 aa).

A signal peptide spans 1–30; sequence MSSQRNYCLAGCLSSCILVILMSFSDAASF. Residues 89–109 form a disordered region; the sequence is EQKDTQALSTDTAKSPTSDDE. The span at 93-104 shows a compositional bias: polar residues; the sequence is TQALSTDTAKSP. Tyrosine 151 bears the Sulfotyrosine mark. Residues 258–273 are compositionally biased toward basic and acidic residues; it reads VESQTQEELKESKEEV. The interval 258–307 is disordered; the sequence is VESQTQEELKESKEEVEKTDDMEDEIKRSGLLGLQDEEPEKDTKEQESEN.

This sequence belongs to the chromogranin/secretogranin protein family.

It is found in the secreted. Its function is as follows. Neuroendocrine protein of the granin family that regulates the biogenesis of secretory granules. The protein is Secretogranin-2 of Pelophylax ridibundus (Marsh frog).